The sequence spans 238 residues: N-acetylneuraminic acid outer membrane channel protein NanC (238 aa).

The N-terminal stretch at 1–23 is a signal peptide; that stretch reads MKKAKILSGVLLLCFSSPLISQA. Residues 24 to 25 lie on the Periplasmic side of the membrane; the sequence is AT. A membrane pass occupies residues 26-32; sequence LDVRGGY. The Extracellular portion of the chain corresponds to 33 to 39; it reads RSGSHAY. The segment at 40-49 is a transmembrane helix; that stretch reads ETRLKVSEGW. Residues 50–52 are Periplasmic-facing; the sequence is QNG. The chain crosses the lipid bilayer at residues 53–61; that stretch reads WWASMESNT. Over 62 to 76 the chain is Extracellular; that stretch reads WNTIHDNKKENAALN. The chain crosses the lipid bilayer at residues 77-86; sequence DVQVEVNYAI. Residues 87–91 are Periplasmic-facing; the sequence is KLDDQ. A membrane pass occupies residues 92-102; sequence WTVRPGMLTHF. Residues 103 to 107 lie on the Extracellular side of the membrane; the sequence is SSNGT. The hydrophobic stretch at 108-117 threads the membrane; that stretch reads RYGPYVKLSW. Over 118 to 122 the chain is Periplasmic; that stretch reads DATKD. A membrane pass occupies residues 123-132; sequence LNFGIRYRYD. Topologically, residues 133–151 are extracellular; the sequence is WKAYRQQDLSGDMSRDNVH. The chain crosses the lipid bilayer at residues 152-159; that stretch reads RWDGYVTY. Over 160–164 the chain is Periplasmic; it reads HINSD. A membrane pass occupies residues 165–173; that stretch reads FTFAWQTTL. The Extracellular portion of the chain corresponds to 174–190; that stretch reads YSKQNDYRYANHKKWAT. A transmembrane helix spans residues 191–200; that stretch reads ENAFVLQYHM. At 201–203 the chain is on the periplasmic side; sequence TPD. Residues 204–212 are membrane-embedded; it reads ITPYIEYDY. At 213–228 the chain is on the extracellular side; that stretch reads LDRQGVYNGRDNLSEN. The segment at 229–236 is a transmembrane helix; that stretch reads SYRIGVSF. Over 237–238 the chain is Periplasmic; sequence KL.

The protein belongs to the oligogalacturonate-specific porin KdgM (TC 1.B.35) family. NanC subfamily. As to quaternary structure, monomer.

The protein resides in the cell outer membrane. The catalysed reaction is N-acetylneuraminate(in) = N-acetylneuraminate(out). In terms of biological role, outer membrane channel protein allowing the entry of N-acetylneuraminic acid (Neu5Ac, the most abundant sialic acid on host cell surfaces) into the bacteria. NanC proteins form high-conductance channels which are open at low membrane potentials and which have a weak anion selectivity. In Escherichia coli O157:H7, this protein is N-acetylneuraminic acid outer membrane channel protein NanC (nanC).